The following is a 372-amino-acid chain: Peptide chain release factor 1 (372 aa).

N5-methylglutamine is present on Gln237.

Belongs to the prokaryotic/mitochondrial release factor family. Methylated by PrmC. Methylation increases the termination efficiency of RF1.

The protein localises to the cytoplasm. Peptide chain release factor 1 directs the termination of translation in response to the peptide chain termination codons UAG and UAA. The chain is Peptide chain release factor 1 from Anaeromyxobacter sp. (strain Fw109-5).